The chain runs to 176 residues: NAD(P)H-quinone oxidoreductase subunit 6, chloroplastic (176 aa).

The next 5 membrane-spanning stretches (helical) occupy residues 10–30 (FLLVFLGLGLILGGLGVVLLA), 32–52 (PIYSAFSLGLVFVCISLFYIL), 61–81 (AQLLIYVGAINVLIIFAVMFI), 92–112 (LWTVGDGVTSVVCTSLFVSLI), and 152–172 (FFIPFEFISIILLVALIGAIA).

The protein belongs to the complex I subunit 6 family. NDH is composed of at least 16 different subunits, 5 of which are encoded in the nucleus.

The protein resides in the plastid. It localises to the chloroplast thylakoid membrane. The catalysed reaction is a plastoquinone + NADH + (n+1) H(+)(in) = a plastoquinol + NAD(+) + n H(+)(out). It carries out the reaction a plastoquinone + NADPH + (n+1) H(+)(in) = a plastoquinol + NADP(+) + n H(+)(out). Its function is as follows. NDH shuttles electrons from NAD(P)H:plastoquinone, via FMN and iron-sulfur (Fe-S) centers, to quinones in the photosynthetic chain and possibly in a chloroplast respiratory chain. The immediate electron acceptor for the enzyme in this species is believed to be plastoquinone. Couples the redox reaction to proton translocation, and thus conserves the redox energy in a proton gradient. In Helianthus annuus (Common sunflower), this protein is NAD(P)H-quinone oxidoreductase subunit 6, chloroplastic (ndhG).